The following is a 374-amino-acid chain: Glutamate 5-kinase (374 aa).

Lysine 8 is a binding site for ATP. Serine 49, aspartate 136, and asparagine 148 together coordinate substrate. ATP-binding positions include 168–169 and 211–217; these read TD and TGGMQTK. The 79-residue stretch at 276 to 354 folds into the PUA domain; it reads QGILTLDDGA…TQIRQILGYG (79 aa).

The protein belongs to the glutamate 5-kinase family.

The protein resides in the cytoplasm. It carries out the reaction L-glutamate + ATP = L-glutamyl 5-phosphate + ADP. Its pathway is amino-acid biosynthesis; L-proline biosynthesis; L-glutamate 5-semialdehyde from L-glutamate: step 1/2. Its function is as follows. Catalyzes the transfer of a phosphate group to glutamate to form L-glutamate 5-phosphate. This is Glutamate 5-kinase from Picosynechococcus sp. (strain ATCC 27264 / PCC 7002 / PR-6) (Agmenellum quadruplicatum).